We begin with the raw amino-acid sequence, 323 residues long: Methionyl-tRNA formyltransferase (323 aa).

Residue 113–116 coordinates (6S)-5,6,7,8-tetrahydrofolate; the sequence is SLLP.

This sequence belongs to the Fmt family.

It carries out the reaction L-methionyl-tRNA(fMet) + (6R)-10-formyltetrahydrofolate = N-formyl-L-methionyl-tRNA(fMet) + (6S)-5,6,7,8-tetrahydrofolate + H(+). Its function is as follows. Attaches a formyl group to the free amino group of methionyl-tRNA(fMet). The formyl group appears to play a dual role in the initiator identity of N-formylmethionyl-tRNA by promoting its recognition by IF2 and preventing the misappropriation of this tRNA by the elongation apparatus. This is Methionyl-tRNA formyltransferase from Nitrosococcus oceani (strain ATCC 19707 / BCRC 17464 / JCM 30415 / NCIMB 11848 / C-107).